We begin with the raw amino-acid sequence, 273 residues long: Bifunctional protein FolD (273 aa).

NADP(+) is bound by residues 155 to 157 (GRS), Ser-180, and Thr-221.

This sequence belongs to the tetrahydrofolate dehydrogenase/cyclohydrolase family. In terms of assembly, homodimer.

The enzyme catalyses (6R)-5,10-methylene-5,6,7,8-tetrahydrofolate + NADP(+) = (6R)-5,10-methenyltetrahydrofolate + NADPH. It carries out the reaction (6R)-5,10-methenyltetrahydrofolate + H2O = (6R)-10-formyltetrahydrofolate + H(+). Its pathway is one-carbon metabolism; tetrahydrofolate interconversion. Catalyzes the oxidation of 5,10-methylenetetrahydrofolate to 5,10-methenyltetrahydrofolate and then the hydrolysis of 5,10-methenyltetrahydrofolate to 10-formyltetrahydrofolate. This Coprothermobacter proteolyticus (strain ATCC 35245 / DSM 5265 / OCM 4 / BT) protein is Bifunctional protein FolD.